We begin with the raw amino-acid sequence, 567 residues long: Inactive protein kinase SELMODRAFT_444075 (567 aa).

A disordered region spans residues 148–206; the sequence is NETRRKGPSPSEVLNSTTSSPASHKPQVLNDFLRMKESREYTEETDTQRNVSRPVDRVS. Over residues 159–169 the composition is skewed to polar residues; that stretch reads EVLNSTTSSPA. Residues 180–189 are compositionally biased toward basic and acidic residues; it reads LRMKESREYT. Residues 196 to 206 show a composition bias toward low complexity; sequence RNVSRPVDRVS. The Protein kinase domain maps to 255–487; the sequence is FSDVNFLAEG…EGDSLSDTSL (233 aa). ATP contacts are provided by residues 261 to 269 and Lys-283; that span reads LAEGGYGSV. The segment covering 511 to 538 has biased composition (low complexity); the sequence is DSSSSRSSSASSVLKSFSRTQHSSRSSS. The tract at residues 511–567 is disordered; sequence DSSSSRSSSASSVLKSFSRTQHSSRSSSNAGSPLNPAATQALAFKKYNKNTTRHTQD. A compositionally biased stretch (basic residues) spans 556-567; the sequence is KYNKNTTRHTQD.

In Selaginella moellendorffii (Spikemoss), this protein is Inactive protein kinase SELMODRAFT_444075.